The following is a 302-amino-acid chain: MTNILDGKKLAKELELRLHEDITEFSPEVGRPPGLAVIRVGDDPASGIYVSNKEKACNRIGLDSFLYHLGTNTSEQEILEVIKALNNDQKVDGILLQLPLPKGLDAEPLLKAIDPEKDVDGLHTLNLGRLLKGEKGPRSCTPAGIMVLLRRNNISLVGKKVVVIGRSILVGKPMALMLQAANATVTVAHSKTINLPEITNQAEVLIVAAGIPQLIGLEHVRSNAVVVDVGIHRIPMEPLKLTGSNYKLCGDVRAEEIYSKIKAITPVPGGVGPMTVAMLMVNTVNRWQYHCGLSSTLSDLLP.

NADP(+) is bound by residues 165-167 (GRS), S190, and I231.

The protein belongs to the tetrahydrofolate dehydrogenase/cyclohydrolase family. As to quaternary structure, homodimer.

The enzyme catalyses (6R)-5,10-methylene-5,6,7,8-tetrahydrofolate + NADP(+) = (6R)-5,10-methenyltetrahydrofolate + NADPH. It carries out the reaction (6R)-5,10-methenyltetrahydrofolate + H2O = (6R)-10-formyltetrahydrofolate + H(+). Its pathway is one-carbon metabolism; tetrahydrofolate interconversion. Its function is as follows. Catalyzes the oxidation of 5,10-methylenetetrahydrofolate to 5,10-methenyltetrahydrofolate and then the hydrolysis of 5,10-methenyltetrahydrofolate to 10-formyltetrahydrofolate. This is Bifunctional protein FolD from Prochlorococcus marinus (strain SARG / CCMP1375 / SS120).